The following is a 169-amino-acid chain: Myosin regulatory light chain 11 (169 aa).

Alanine 2 carries the n,N,N-trimethylalanine modification. Phosphoserine is present on residues serine 15 and serine 16. Residues threonine 25 and threonine 35 each carry the phosphothreonine modification. One can recognise an EF-hand 1 domain in the interval 25–60; that stretch reads TQIQEFKEAFTVIDQNRDGIIDKEDLRDTFAAMGRL. Residues aspartate 38, asparagine 40, aspartate 42, and aspartate 49 each contribute to the Ca(2+) site. At serine 75 the chain carries Phosphoserine. 2 EF-hand domains span residues 95 to 130 and 131 to 166; these read DPED…QCDR and FSQE…GDAK. Threonine 101 carries the post-translational modification Phosphothreonine.

Myosin is a hexamer of 2 heavy chains and 4 light chains. Expressed in fetal and adult skeletal muscle.

Myosin regulatory subunit that plays an essential role to maintain muscle integrity during early development. Plays a role in muscle contraction. The chain is Myosin regulatory light chain 11 from Homo sapiens (Human).